A 26-amino-acid polypeptide reads, in one-letter code: GVPSVSTVNVAQKQHDVNFLLFKVYI.

This sequence belongs to the tyrosinase family. Hemocyanin subfamily. Hemolymph.

Its subcellular location is the secreted. It localises to the extracellular space. Its function is as follows. Hemocyanins are copper-containing oxygen carriers occurring freely dissolved in the hemolymph of many mollusks and arthropods. This chain is Hemocyanin subunit 3, found in Homarus americanus (American lobster).